Consider the following 233-residue polypeptide: Gamma-glutamyl-hercynylcysteine sulfoxide hydrolase (233 aa).

The active-site Nucleophile is Cys2. The region spanning 2 to 233 (CRHLGWLGAQ…TALDRAKGPR (232 aa)) is the Glutamine amidotransferase type-2 domain.

It catalyses the reaction gamma-L-glutamyl-hercynylcysteine S-oxide + H2O = S-(hercyn-2-yl)-L-cysteine S-oxide + L-glutamate. It functions in the pathway amino-acid biosynthesis; ergothioneine biosynthesis. Functionally, catalyzes the hydrolysis of the gamma-glutamyl amide bond of hercynyl-gamma-L-glutamyl-L-cysteine sulfoxide to produce hercynylcysteine sulfoxide, a step in the biosynthesis pathway of ergothioneine. ERG is one of the major redox buffers which protects bacteria against redox stressors and antibiotics; loss of ERG or mycothiol (MSH, the other major redox buffer in this bacteria) leads to respiratory alterations and bioenergetic deficiencies that negatively impact virulence. In Mycobacterium tuberculosis (strain CDC 1551 / Oshkosh), this protein is Gamma-glutamyl-hercynylcysteine sulfoxide hydrolase.